Here is a 428-residue protein sequence, read N- to C-terminus: Mitochondrial distribution and morphology protein 12 (428 aa).

The 387-residue stretch at 1–387 (MSFDINWNQL…WPSWICIDMN (387 aa)) folds into the SMP-LTD domain. 2 disordered regions span residues 75 to 168 (VMNE…APPL) and 387 to 428 (NDDD…EAGE). Residues 81–96 (NDSKDEHLKNHGDGIN) are compositionally biased toward basic and acidic residues. Residues 106-133 (LDDEDEDDEDDDEDDEDEEEEDEDDYDD) are compositionally biased toward acidic residues. Polar residues predominate over residues 146-161 (LNFNENSTTPSANSFA). Acidic residues predominate over residues 387 to 403 (NDDDDEEEEEEESEDND). A compositionally biased stretch (basic and acidic residues) spans 412 to 428 (NDGKHGDGRTDETEAGE).

It belongs to the MDM12 family. Component of the ER-mitochondria encounter structure (ERMES) or MDM complex, composed of MMM1, MDM10, MDM12 and MDM34. An MMM1 homodimer associates with one molecule of MDM12 on each side in a pairwise head-to-tail manner, and the SMP-LTD domains of MMM1 and MDM12 generate a continuous hydrophobic tunnel for phospholipid trafficking.

The protein localises to the mitochondrion outer membrane. It localises to the endoplasmic reticulum membrane. Component of the ERMES/MDM complex, which serves as a molecular tether to connect the endoplasmic reticulum (ER) and mitochondria. Components of this complex are involved in the control of mitochondrial shape and protein biogenesis, and function in nonvesicular lipid trafficking between the ER and mitochondria. MDM12 is required for the interaction of the ER-resident membrane protein MMM1 and the outer mitochondrial membrane-resident beta-barrel protein MDM10. The MDM12-MMM1 subcomplex functions in the major beta-barrel assembly pathway that is responsible for biogenesis of all mitochondrial outer membrane beta-barrel proteins, and acts in a late step after the SAM complex. The MDM10-MDM12-MMM1 subcomplex further acts in the TOM40-specific pathway after the action of the MDM12-MMM1 complex. Essential for establishing and maintaining the structure of mitochondria and maintenance of mtDNA nucleoids. The sequence is that of Mitochondrial distribution and morphology protein 12 from Candida albicans (strain SC5314 / ATCC MYA-2876) (Yeast).